The primary structure comprises 503 residues: Transcription termination/antitermination protein NusA (503 aa).

Positions 140–206 (GELVIGVVKR…RGPQLLVSRT (67 aa)) constitute an S1 motif domain. The region spanning 308 to 374 (SHTMDIAVNK…FMEKLDVDEE (67 aa)) is the KH domain.

The protein belongs to the NusA family. As to quaternary structure, monomer. Binds directly to the core enzyme of the DNA-dependent RNA polymerase and to nascent RNA.

The protein localises to the cytoplasm. Participates in both transcription termination and antitermination. The sequence is that of Transcription termination/antitermination protein NusA from Coxiella burnetii (strain RSA 493 / Nine Mile phase I).